The chain runs to 300 residues: Porphobilinogen deaminase (300 aa).

Residue Cys243 is modified to S-(dipyrrolylmethanemethyl)cysteine.

Belongs to the HMBS family. As to quaternary structure, monomer. Dipyrromethane serves as cofactor.

The enzyme catalyses 4 porphobilinogen + H2O = hydroxymethylbilane + 4 NH4(+). The protein operates within porphyrin-containing compound metabolism; protoporphyrin-IX biosynthesis; coproporphyrinogen-III from 5-aminolevulinate: step 2/4. Its function is as follows. Tetrapolymerization of the monopyrrole PBG into the hydroxymethylbilane pre-uroporphyrinogen in several discrete steps. The protein is Porphobilinogen deaminase of Clostridium novyi (strain NT).